Reading from the N-terminus, the 102-residue chain is Small ribosomal subunit protein uS10 (102 aa).

The protein belongs to the universal ribosomal protein uS10 family. As to quaternary structure, part of the 30S ribosomal subunit.

In terms of biological role, involved in the binding of tRNA to the ribosomes. The sequence is that of Small ribosomal subunit protein uS10 from Methanococcus maripaludis (strain C5 / ATCC BAA-1333).